A 137-amino-acid polypeptide reads, in one-letter code: Large ribosomal subunit protein uL16 (137 aa).

The protein belongs to the universal ribosomal protein uL16 family. As to quaternary structure, part of the 50S ribosomal subunit.

Binds 23S rRNA and is also seen to make contacts with the A and possibly P site tRNAs. This is Large ribosomal subunit protein uL16 from Stutzerimonas stutzeri (strain A1501) (Pseudomonas stutzeri).